A 296-amino-acid chain; its full sequence is GTPase Era (296 aa).

Residues 7–173 form the Era-type G domain; sequence KAGFVSIIGR…VDLVREHLPE (167 aa). The interval 15–22 is G1; that stretch reads GRPNVGKS. 15–22 is a GTP binding site; it reads GRPNVGKS. The tract at residues 41-45 is G2; the sequence is QTTRN. The segment at 62-65 is G3; the sequence is DTPG. GTP-binding positions include 62–66 and 122–125; these read DTPGI and NKID. Positions 122-125 are G4; that stretch reads NKID. The tract at residues 152 to 154 is G5; that stretch reads ISA. The 78-residue stretch at 204 to 281 folds into the KH type-2 domain; the sequence is TNREVPYGTA…YLELFVQVQE (78 aa).

Belongs to the TRAFAC class TrmE-Era-EngA-EngB-Septin-like GTPase superfamily. Era GTPase family. As to quaternary structure, monomer.

Its subcellular location is the cytoplasm. The protein resides in the cell inner membrane. Its function is as follows. An essential GTPase that binds both GDP and GTP, with rapid nucleotide exchange. Plays a role in 16S rRNA processing and 30S ribosomal subunit biogenesis and possibly also in cell cycle regulation and energy metabolism. This is GTPase Era from Trichlorobacter lovleyi (strain ATCC BAA-1151 / DSM 17278 / SZ) (Geobacter lovleyi).